Reading from the N-terminus, the 3658-residue chain is E3 ubiquitin-protein ligase UPL2 (3658 aa).

Basic and acidic residues predominate over residues 884–893; that stretch reads DEKKSVDRAS. Positions 884-914 are disordered; it reads DEKKSVDRASDNSVSASSSTAERESDEDSSN. Residues 894 to 903 are compositionally biased toward low complexity; that stretch reads DNSVSASSST. A UBA domain is found at 1271–1312; sequence QPDEAIVGMIVEMGFSRSRAEDALRRVGTNSVEMAMDWLFTN. Residues 1318 to 1337 enclose the UIM domain; it reads QEDDELAQALALSLGNSSET. Disordered stretches follow at residues 1331 to 1360, 1702 to 1733, 2004 to 2038, 2052 to 2072, 2113 to 2204, 2293 to 2313, 2417 to 2487, 2503 to 2591, and 2958 to 2987; these read LGNS…KEPP, VSGS…SKSH, AEQL…VDEL, VDNG…RGSS, HVED…DDMV, PLFS…SAGS, ERET…EGGG, SAQG…PEVN, and SPSS…AESE. Over residues 1338–1347 the composition is skewed to basic and acidic residues; the sequence is PKLEDTEKPV. Over residues 2007–2027 the composition is skewed to basic and acidic residues; sequence LKSEVPNEQKNTDSDERHDSH. Residues 2028–2038 show a composition bias toward polar residues; the sequence is GTSTSTEVDEL. Composition is skewed to acidic residues over residues 2117 to 2144 and 2156 to 2204; these read RADD…DSVE and DVED…DDMV. A compositionally biased stretch (polar residues) spans 2297 to 2313; sequence RPSQTGNTASVSASAGS. Low complexity predominate over residues 2422–2431; the sequence is TTEVQEQQQP. Over residues 2503–2518 the composition is skewed to polar residues; that stretch reads SAQGQSDTSGIQNVSV. Position 2582 is a phosphoserine (Ser-2582). Positions 3317-3658 constitute an HECT domain; it reads SPQDLKGRLN…HEANEGFGFA (342 aa). Cys-3625 (glycyl thioester intermediate) is an active-site residue.

The protein belongs to the UPL family. TOM1/PTR1 subfamily. Widely expressed. Expressed in root, stem, cauline and rosette leaf, seedling and flower (at protein level).

It catalyses the reaction S-ubiquitinyl-[E2 ubiquitin-conjugating enzyme]-L-cysteine + [acceptor protein]-L-lysine = [E2 ubiquitin-conjugating enzyme]-L-cysteine + N(6)-ubiquitinyl-[acceptor protein]-L-lysine.. The protein operates within protein modification; protein ubiquitination. In terms of biological role, probable E3 ubiquitin-protein ligase which mediates ubiquitination and subsequent proteasomal degradation of target proteins. This is E3 ubiquitin-protein ligase UPL2 (UPL2) from Arabidopsis thaliana (Mouse-ear cress).